Here is a 286-residue protein sequence, read N- to C-terminus: Probable ketoamine kinase EAE_16955 (286 aa).

ATP is bound at residue 92 to 94; the sequence is EYL. Residue Asp-194 is the Proton acceptor of the active site.

The protein belongs to the fructosamine kinase family.

In terms of biological role, ketoamine kinase that phosphorylates ketoamines on the third carbon of the sugar moiety to generate ketoamine 3-phosphate. In Klebsiella aerogenes (strain ATCC 13048 / DSM 30053 / CCUG 1429 / JCM 1235 / KCTC 2190 / NBRC 13534 / NCIMB 10102 / NCTC 10006 / CDC 819-56) (Enterobacter aerogenes), this protein is Probable ketoamine kinase EAE_16955.